Reading from the N-terminus, the 147-residue chain is Leghemoglobin 3 (147 aa).

The Globin domain occupies 2 to 147 (GFTAQQEALV…LATAIKKAMG (146 aa)). At Tyr30 the chain carries Nitrated tyrosine. Residue Ser45 coordinates heme b. Ser45 carries the post-translational modification Phosphoserine. Position 61 (His61) interacts with O2. 3 residues coordinate heme b: Lys64, His93, and Lys96. Tyr135 carries the post-translational modification Nitrated tyrosine.

Belongs to the plant globin family. Monomer. Post-translationally, nitrated in effective nodules and particularly in hypoxic conditions; this mechanism may play a protective role in the symbiosis by buffering toxic peroxynitrite NO(2)(-). Nitration level decrease during nodule senescence. In terms of processing, phosphorylation at Ser-45 disrupts the molecular environment of its porphyrin ring oxygen binding pocket, thus leading to a reduced oxygen consumption and to the delivery of oxygen O(2) to symbiosomes. As to expression, specifically and strongly expressed in root nodules and at low levels in seedlings.

The protein localises to the cytoplasm. The protein resides in the cytosol. Its subcellular location is the nucleus. In terms of biological role, leghemoglobin that reversibly binds oxygen O(2) through a pentacoordinated heme iron. In root nodules, facilitates the diffusion of oxygen to the bacteroids while preventing the bacterial nitrogenase from being inactivated by buffering dioxygen, nitric oxide and carbon monoxide, and promoting the formation of reactive oxygen species (ROS, e.g. H(2)O(2)). This role is essential for symbiotic nitrogen fixation (SNF). In Lotus japonicus (Lotus corniculatus var. japonicus), this protein is Leghemoglobin 3.